Consider the following 93-residue polypeptide: Acylphosphatase (93 aa).

Positions 7 to 93 (RAHVFVSGTV…EGIDGFHIRR (87 aa)) constitute an Acylphosphatase-like domain. Active-site residues include Arg-22 and Asn-40.

The protein belongs to the acylphosphatase family.

The enzyme catalyses an acyl phosphate + H2O = a carboxylate + phosphate + H(+). The protein is Acylphosphatase (acyP) of Haloquadratum walsbyi (strain DSM 16790 / HBSQ001).